The sequence spans 495 residues: Lysine--tRNA ligase (495 aa).

Positions 406 and 413 each coordinate Mg(2+).

Belongs to the class-II aminoacyl-tRNA synthetase family. Homodimer. Requires Mg(2+) as cofactor.

The protein localises to the cytoplasm. It catalyses the reaction tRNA(Lys) + L-lysine + ATP = L-lysyl-tRNA(Lys) + AMP + diphosphate. This chain is Lysine--tRNA ligase, found in Leptospira borgpetersenii serovar Hardjo-bovis (strain JB197).